A 212-amino-acid polypeptide reads, in one-letter code: MLNKQTLISIEDALPGREQPMQIEDCHFVNQSSLTAPLAHHQQQILLGMGCFWGAERLFWQLDGVVSTSVGYAGGFTPNPTYEEVCTGKTGHTEVVRVVFDERVISLAQLLAVFWEKHDPTQGMRQGNDLGTQYRSAIYTYSQDQQEIADKSKLQYQQALEAELRSTITTEIVPAGPYYFAETYHQQYLAKNPDGYCGIGGTGVCFPPSLQG.

Cysteine 51 is a catalytic residue.

This sequence belongs to the MsrA Met sulfoxide reductase family.

The enzyme catalyses L-methionyl-[protein] + [thioredoxin]-disulfide + H2O = L-methionyl-(S)-S-oxide-[protein] + [thioredoxin]-dithiol. The catalysed reaction is [thioredoxin]-disulfide + L-methionine + H2O = L-methionine (S)-S-oxide + [thioredoxin]-dithiol. Functionally, has an important function as a repair enzyme for proteins that have been inactivated by oxidation. Catalyzes the reversible oxidation-reduction of methionine sulfoxide in proteins to methionine. This is Peptide methionine sulfoxide reductase MsrA from Vibrio parahaemolyticus serotype O3:K6 (strain RIMD 2210633).